The primary structure comprises 1062 residues: Inversin (1062 aa).

16 ANK repeats span residues 13-42, 47-76, 80-110, 113-144, 148-177, 181-213, 220-250, 254-283, 288-317, 321-350, 356-385, 389-418, 422-451, 455-484, 488-517, and 523-553; these read SLAS…ALRD, FGRT…DVNK, SRRT…WMQK, EEMT…EVDT, NKQT…NIGI, EGKI…TESL, EGRT…NITS, LFRT…SGTI, QGAT…VKDD, EGRT…DIDI, YGGT…QVDA, MKHT…RVDL, DGHS…NPNV, AGRT…DPNI, EGRT…FPNQ, and ERYT…SIAA. Asparagine 75 is modified (3-hydroxyasparagine). The short motif at 490–498 is the D-box 1 element; sequence RTALHWSCN. Residues 555–584 enclose the IQ 1 domain; sequence QDIAAFKIQAVYKGYKVRKAFRDRKNLLMK. Residues 589-608 show a composition bias toward basic and acidic residues; the sequence is RKDAAAKKREEENKRKEAEQ. The disordered stretch occupies residues 589-849; the sequence is RKDAAAKKRE…QDKLIGGVSS (261 aa). Composition is skewed to polar residues over residues 636-658 and 676-689; these read QNEG…TVQS and QGDS…TASR. A compositionally biased stretch (basic and acidic residues) spans 690 to 700; the sequence is KPSETPIEHCR. The segment covering 713-724 has biased composition (polar residues); that stretch reads GGNSSKNQGTSS. Composition is skewed to basic and acidic residues over residues 725–741 and 775–788; these read VEKR…RCEE and DHPR…DRAA. Residues 907-915 carry the D-box 2 motif; it reads RKELFRRKN. The region spanning 914–943 is the IQ 2 domain; sequence KNKAAAVIQRAWRSYQLRKHLSRLLHLKQL. Residues 1042 to 1062 are disordered; sequence RSKKFSYNLQPSSQSKNKPKL. The span at 1046–1062 shows a compositional bias: polar residues; the sequence is FSYNLQPSSQSKNKPKL.

In terms of assembly, interacts with microtubules. Interacts with NPHP1. Interacts with DVL1, PRICKLE (PRICKLE1 or PRICKLE2) and Strabismus (VANGL1 or VANGL2). Binds calmodulin via its IQ domains. Interacts with APC2. Interacts with alpha-, beta-, and gamma-catenin. Interacts with N-cadherin (CDH2). Interacts with NPHP3. Interacts with IQCB1; the interaction likely requires additional interactors. Component of a complex containing at least ANKS6, INVS, NEK8 and NPHP3. ANKS6 may organize complex assembly by linking INVS and NPHP3 to NEK8 and INVS may target the complex to the proximal ciliary axoneme. May be ubiquitinated via its interaction with APC2. Post-translationally, hydroxylated at Asn-75, most probably by HIF1AN. Strongly expressed in the primary cilia of renal cells, especially in the varicosities, swellings observed in the cilia. Localizes in the node monocilia and in other 9+0 monocilia, including those of kidney epithelial cells and the pituitary gland, but it does not localize to 9+2 cilia (at protein level). In adult, it is expressed at high level in liver and kidney. Weakly or not expressed in other tissues.

Its subcellular location is the cytoplasm. It localises to the cytoskeleton. It is found in the membrane. The protein localises to the nucleus. The protein resides in the perinuclear region. Its subcellular location is the spindle. In terms of biological role, required for normal renal development and establishment of left-right axis. Probably acts as a molecular switch between different Wnt signaling pathways. Inhibits the canonical Wnt pathway by targeting cytoplasmic disheveled (DVL1) for degradation by the ubiquitin-proteasome. This suggests that it is required in renal development to oppose the repression of terminal differentiation of tubular epithelial cells by Wnt signaling. Involved in the organization of apical junctions in kidney cells together with NPHP1, NPHP4 and RPGRIP1L/NPHP8. Does not seem to be strictly required for ciliogenesis. In Mus musculus (Mouse), this protein is Inversin (Invs).